A 142-amino-acid polypeptide reads, in one-letter code: Large ribosomal subunit protein uL13 (142 aa).

It belongs to the universal ribosomal protein uL13 family. Part of the 50S ribosomal subunit.

In terms of biological role, this protein is one of the early assembly proteins of the 50S ribosomal subunit, although it is not seen to bind rRNA by itself. It is important during the early stages of 50S assembly. This chain is Large ribosomal subunit protein uL13, found in Janthinobacterium sp. (strain Marseille) (Minibacterium massiliensis).